The chain runs to 245 residues: tRNA pseudouridine synthase A (245 aa).

Asp-52 (nucleophile) is an active-site residue. Substrate is bound at residue Tyr-111.

This sequence belongs to the tRNA pseudouridine synthase TruA family. In terms of assembly, homodimer.

It carries out the reaction uridine(38/39/40) in tRNA = pseudouridine(38/39/40) in tRNA. Its function is as follows. Formation of pseudouridine at positions 38, 39 and 40 in the anticodon stem and loop of transfer RNAs. The chain is tRNA pseudouridine synthase A from Zymomonas mobilis subsp. mobilis (strain ATCC 31821 / ZM4 / CP4).